We begin with the raw amino-acid sequence, 247 residues long: MMAGSTTTTTAAVRVRGAGRAFAGRQVLRGVDLDIAPGEFVALLGASGSGKSTLLRAIGGLDRGFTGTLEAPRSKAIVFQEHRLIPWISVWRNVVLGVRGRDLAARARTALDEVGLSAEADAWPATLSGGEAQRVALARALVRHPDLLLLDEPFGALDALTRLKAQALVARLWQQHRPAVLLVTHDVEEALLLADRALVLRDGRIAESFDITVTRPRSVVDPEFSALRRRLLLALGVDPDAPTGAQS.

The region spanning 13–227 (VRVRGAGRAF…SVVDPEFSAL (215 aa)) is the ABC transporter domain. Residue 45 to 52 (GASGSGKS) participates in ATP binding.

The protein belongs to the ABC transporter superfamily. Aliphatic sulfonates importer (TC 3.A.1.17.2) family. As to quaternary structure, the complex is composed of two ATP-binding proteins (SsuB), two transmembrane proteins (SsuC) and a solute-binding protein (SsuA).

The protein resides in the cell membrane. It catalyses the reaction ATP + H2O + aliphatic sulfonate-[sulfonate-binding protein]Side 1 = ADP + phosphate + aliphatic sulfonateSide 2 + [sulfonate-binding protein]Side 1.. In terms of biological role, part of the ABC transporter complex SsuABC involved in aliphatic sulfonates import. Responsible for energy coupling to the transport system. The protein is Aliphatic sulfonates import ATP-binding protein SsuB 3 of Nocardia farcinica (strain IFM 10152).